The chain runs to 115 residues: Holo-[acyl-carrier-protein] synthase (115 aa).

Mg(2+) is bound by residues aspartate 6 and glutamate 51.

It belongs to the P-Pant transferase superfamily. AcpS family. The cofactor is Mg(2+).

Its subcellular location is the cytoplasm. It catalyses the reaction apo-[ACP] + CoA = holo-[ACP] + adenosine 3',5'-bisphosphate + H(+). In terms of biological role, transfers the 4'-phosphopantetheine moiety from coenzyme A to a Ser of acyl-carrier-protein. This chain is Holo-[acyl-carrier-protein] synthase, found in Campylobacter jejuni subsp. jejuni serotype O:2 (strain ATCC 700819 / NCTC 11168).